Here is a 132-residue protein sequence, read N- to C-terminus: Protein LH2 (132 aa).

This chain is Protein LH2, found in Pantherophis guttatus (Corn snake).